The sequence spans 539 residues: F-box/WD-40 repeat-containing protein At5g21040 (539 aa).

The region spanning Ser65–Phe111 is the F-box domain. 7 WD repeats span residues Gly160 to Ala199, Lys201 to Phe239, Gly255 to Thr292, Arg294 to Ile330, Ala334 to Ser373, Pro382 to Arg419, and Pro433 to Arg477. The interval Gly505–Ala539 is disordered. The span at Ala526–Ala539 shows a compositional bias: basic residues.

This chain is F-box/WD-40 repeat-containing protein At5g21040, found in Arabidopsis thaliana (Mouse-ear cress).